The chain runs to 1291 residues: Vacuolating cytotoxin autotransporter (1291 aa).

The first 33 residues, 1 to 33 (MEIQQTHRKINRPLVSLALVGALVSITPQQSHA), serve as a signal peptide directing secretion. A disordered region spans residues 326–374 (PPEGGYKDKPNDKPSNTTQNNAKNDKQESSQNNSNTQVINPPNSAQKTE). Composition is skewed to polar residues over residues 338 to 347 (KPSNTTQNNA) and 354 to 374 (SSQN…QKTE). The 274-residue stretch at 1018-1291 (KYEKPTNVWA…ASNLGMRYSF (274 aa)) folds into the Autotransporter domain.

The protein localises to the periplasm. Its subcellular location is the secreted. The protein resides in the cell surface. It is found in the cell outer membrane. Induces vacuolation of eukaryotic cells. Causes ulceration and gastric lesions. This is Vacuolating cytotoxin autotransporter (vacA) from Helicobacter pylori (Campylobacter pylori).